A 32-amino-acid chain; its full sequence is ATP synthase subunit O, mitochondrial (32 aa).

Belongs to the ATPase delta chain family. F-type ATPases have 2 components, CF(1) - the catalytic core - and CF(0) - the membrane proton channel. CF(1) has five subunits: alpha(3), beta(3), gamma(1), delta(1), epsilon(1). CF(0) has three main subunits: a, b and c.

The protein resides in the mitochondrion. Its subcellular location is the mitochondrion inner membrane. Mitochondrial membrane ATP synthase (F(1)F(0) ATP synthase or Complex V) produces ATP from ADP in the presence of a proton gradient across the membrane which is generated by electron transport complexes of the respiratory chain. F-type ATPases consist of two structural domains, F(1) - containing the extramembraneous catalytic core and F(0) - containing the membrane proton channel, linked together by a central stalk and a peripheral stalk. During catalysis, ATP synthesis in the catalytic domain of F(1) is coupled via a rotary mechanism of the central stalk subunits to proton translocation. Part of the complex F(0) domain and the peripheric stalk, which acts as a stator to hold the catalytic alpha(3)beta(3) subcomplex and subunit a/ATP6 static relative to the rotary elements. In Spinacia oleracea (Spinach), this protein is ATP synthase subunit O, mitochondrial.